A 627-amino-acid chain; its full sequence is Putative polyketide hydroxylase (627 aa).

FAD is bound by residues 22 to 51 and 309 to 319; these read PVLV…LVER and YRSGRVLLAGD. The disordered stretch occupies residues 370-469; sequence AEATSARAAH…GGGPGGGGPQ (100 aa). A compositionally biased stretch (gly residues) spans 395-469; that stretch reads AGGGGPGAGT…GGGPGGGGPQ (75 aa).

The protein belongs to the PheA/TfdB FAD monooxygenase family. FAD is required as a cofactor.

Its function is as follows. Involved in developmentally regulated synthesis of a compound biosynthetically related to polyketide antibiotics which is essential for spore color in Streptococcus coelicolor. This Streptomyces coelicolor (strain ATCC BAA-471 / A3(2) / M145) protein is Putative polyketide hydroxylase.